Here is a 344-residue protein sequence, read N- to C-terminus: Phenylalanine--tRNA ligase alpha subunit (344 aa).

Residue Glu-256 participates in Mg(2+) binding.

This sequence belongs to the class-II aminoacyl-tRNA synthetase family. Phe-tRNA synthetase alpha subunit type 1 subfamily. As to quaternary structure, tetramer of two alpha and two beta subunits. Mg(2+) serves as cofactor.

It is found in the cytoplasm. The enzyme catalyses tRNA(Phe) + L-phenylalanine + ATP = L-phenylalanyl-tRNA(Phe) + AMP + diphosphate + H(+). The polypeptide is Phenylalanine--tRNA ligase alpha subunit (Bacillus mycoides (strain KBAB4) (Bacillus weihenstephanensis)).